A 374-amino-acid polypeptide reads, in one-letter code: tRNA-specific 2-thiouridylase MnmA (374 aa).

ATP is bound by residues 13-20 (GMSGGVDS) and M39. The interaction with target base in tRNA stretch occupies residues 99 to 101 (NPD). Residue C104 is the Nucleophile of the active site. C104 and C201 are oxidised to a cystine. G128 is an ATP binding site. The tract at residues 151-153 (KDQ) is interaction with tRNA. Catalysis depends on C201, which acts as the Cysteine persulfide intermediate. The interaction with tRNA stretch occupies residues 313–314 (RY).

It belongs to the MnmA/TRMU family.

It localises to the cytoplasm. It catalyses the reaction S-sulfanyl-L-cysteinyl-[protein] + uridine(34) in tRNA + AH2 + ATP = 2-thiouridine(34) in tRNA + L-cysteinyl-[protein] + A + AMP + diphosphate + H(+). Its function is as follows. Catalyzes the 2-thiolation of uridine at the wobble position (U34) of tRNA, leading to the formation of s(2)U34. The polypeptide is tRNA-specific 2-thiouridylase MnmA (Streptococcus suis (strain 98HAH33)).